A 345-amino-acid chain; its full sequence is Protein-glutamate methylesterase/protein-glutamine glutaminase 2 (345 aa).

The 116-residue stretch at 1–116 (MVVDDSAVVR…KQFLVDASDD (116 aa)) folds into the Response regulatory domain. Aspartate 50 bears the 4-aspartylphosphate mark. Residues 154-345 (LQTTERVVAL…AREIMAQMAG (192 aa)) enclose the CheB-type methylesterase domain. Active-site residues include serine 166, histidine 192, and aspartate 288.

It belongs to the CheB family. Phosphorylated by CheA. Phosphorylation of the N-terminal regulatory domain activates the methylesterase activity.

The protein resides in the cytoplasm. It carries out the reaction [protein]-L-glutamate 5-O-methyl ester + H2O = L-glutamyl-[protein] + methanol + H(+). It catalyses the reaction L-glutaminyl-[protein] + H2O = L-glutamyl-[protein] + NH4(+). Its function is as follows. Involved in chemotaxis. Part of a chemotaxis signal transduction system that modulates chemotaxis in response to various stimuli. Catalyzes the demethylation of specific methylglutamate residues introduced into the chemoreceptors (methyl-accepting chemotaxis proteins or MCP) by CheR. Also mediates the irreversible deamidation of specific glutamine residues to glutamic acid. This chain is Protein-glutamate methylesterase/protein-glutamine glutaminase 2, found in Albidiferax ferrireducens (strain ATCC BAA-621 / DSM 15236 / T118) (Rhodoferax ferrireducens).